Here is an 848-residue protein sequence, read N- to C-terminus: Neuroligin-3 (848 aa).

The first 37 residues, 1–37 (MWLQLGLPSLSLSPTPTVGRSLCLILWFLSLVLRAST), serve as a signal peptide directing secretion. The Extracellular portion of the chain corresponds to 38 to 709 (QAPAPTVNTH…NPRDYSTELS (672 aa)). An N-linked (GlcNAc...) asparagine glycan is attached at Asn98. A disulfide bond links Cys106 and Cys141. Positions 169 to 195 (CRKGGSGAKKQGEDLADNDGDEDEDIR) are disordered. A compositionally biased stretch (acidic residues) spans 182 to 194 (DLADNDGDEDEDI). Intrachain disulfides connect Cys340–Cys351 and Cys510–Cys544. N-linked (GlcNAc...) asparagine glycosylation is present at Asn545. Polar residues-rich tracts occupy residues 645–656 (TKVPPPDTTHSS) and 677–689 (AYSN…SWNG). Residues 645–691 (TKVPPPDTTHSSHITRRPNGKTWSTKRPAISPAYSNENAPGSWNGDQ) are disordered. The helical transmembrane segment at 710-730 (VTIAVGASLLFLNVLAFAALY) threads the bilayer. Residues 731–848 (YRKDKRRQEP…LPNSHSTTRV (118 aa)) are Cytoplasmic-facing. A Phosphoserine modification is found at Ser745. A Phosphotyrosine modification is found at Tyr792.

It belongs to the type-B carboxylesterase/lipase family. In terms of assembly, homodimer, and heterodimer with NLGN1 and NLGN2. Interacts with neurexins NRXN1, NRXN2 and NRXN3. Interaction with neurexins is mediated by heparan sulfate glycan modification on neurexin. Interacts (via its C-terminus) with DLG4/PSD-95 (via PDZ domain 3). The N-terminus is blocked. In terms of tissue distribution, detected in brain and on hippocampus neurons, especially at excitatory synapses. Detected in retina (at protein level). Expressed in brain, spinal cord and dorsal root ganglion.

It is found in the cell membrane. The protein resides in the synapse. Cell surface protein involved in cell-cell-interactions via its interactions with neurexin family members. Plays a role in synapse function and synaptic signal transmission, and probably mediates its effects by recruiting and clustering other synaptic proteins. May promote the initial formation of synapses, but is not essential for this. May also play a role in glia-glia or glia-neuron interactions in the developing peripheral nervous system. This is Neuroligin-3 (Nlgn3) from Rattus norvegicus (Rat).